The following is an 861-amino-acid chain: Protein argonaute-4 (861 aa).

The 120-residue stretch at 219-338 (PIIEFMCEVL…LPLEVCNIVA (120 aa)) folds into the PAZ domain. In terms of domain architecture, Piwi spans 509 to 820 (LIVVILPGKT…VAFRARYHLV (312 aa)). The segment at 825–846 (DSAEGSHVSGQSNGRDPQALAK) is disordered.

The protein belongs to the argonaute family. Ago subfamily. As to quaternary structure, interacts with EIF4B, IMP8, PRMT5, TNRC6A and TNRC6B. Interacts with ZFP36. In terms of processing, ubiquitinated on surface-exposed lysines by a SCF-like E3 ubiquitin-protein ligase complex containing ZSWIM8 during target-directed microRNA degradation (TDMD), a process that mediates degradation of microRNAs (miRNAs). Ubiquitination by the SCF-like E3 ubiquitin-protein ligase complex containing ZSWIM8 leads to its subsequent degradation, thereby exposing miRNAs for degradation. ZSWIM8 recognizes and binds AGO4 when it is engaged with a TDMD target.

It localises to the cytoplasm. The protein resides in the P-body. Its function is as follows. Required for RNA-mediated gene silencing (RNAi). Binds to short RNAs such as microRNAs (miRNAs) and represses the translation of mRNAs which are complementary to them. Lacks endonuclease activity and does not appear to cleave target mRNAs. Also required for RNA-directed transcription and replication of the human hapatitis delta virus (HDV). The polypeptide is Protein argonaute-4 (AGO4) (Homo sapiens (Human)).